Here is a 92-residue protein sequence, read N- to C-terminus: uncharacterized protein (92 aa).

Residues 65-86 form a helical membrane-spanning segment; it reads AVWIFWLCFLVSGLSRAFLVYF.

The protein localises to the membrane. This is an uncharacterized protein from Treponema pallidum (strain Nichols).